A 351-amino-acid polypeptide reads, in one-letter code: Dihydroorotate dehydrogenase (quinone) (351 aa).

Residues 61 to 65 and Thr85 each bind FMN; that span reads AGLDK. Lys65 is a binding site for substrate. 110-114 contributes to the substrate binding site; it reads NRMGF. Asn139 and Asn172 together coordinate FMN. Asn172 contributes to the substrate binding site. The active-site Nucleophile is the Ser175. Asn177 contributes to the substrate binding site. 2 residues coordinate FMN: Lys217 and Thr245. 246–247 lines the substrate pocket; it reads NT. FMN contacts are provided by residues Gly268, Gly297, and 318-319; that span reads YT.

It belongs to the dihydroorotate dehydrogenase family. Type 2 subfamily. Monomer. FMN serves as cofactor.

The protein resides in the cell membrane. It carries out the reaction (S)-dihydroorotate + a quinone = orotate + a quinol. It functions in the pathway pyrimidine metabolism; UMP biosynthesis via de novo pathway; orotate from (S)-dihydroorotate (quinone route): step 1/1. Its function is as follows. Catalyzes the conversion of dihydroorotate to orotate with quinone as electron acceptor. The sequence is that of Dihydroorotate dehydrogenase (quinone) from Xylella fastidiosa (strain M23).